Reading from the N-terminus, the 759-residue chain is Inhibitor of nuclear factor kappa-B kinase subunit alpha (759 aa).

Positions 1-20 are disordered; the sequence is MERGAERGPPPAPGGVALRG. Residues 29–316 enclose the Protein kinase domain; sequence WEMRDRLGTG…PETNSPKCFL (288 aa). Residues 35-43 and Lys-58 contribute to the ATP site; that span reads LGTGGFGNV. Asp-158 (proton acceptor) is an active-site residue. The interval 469-490 is leucine-zipper; the sequence is LLRYNANLIKMKNNMVSASQQL. Residues 691-703 show a composition bias toward polar residues; the sequence is TPAATWVPQSSSE. Residues 691 to 715 are disordered; that stretch reads TPAATWVPQSSSEYAPHPLSSMATP. The interval 753 to 758 is NEMO-binding; that stretch reads FDWSWL.

It belongs to the protein kinase superfamily. Ser/Thr protein kinase family. I-kappa-B kinase subfamily.

The protein resides in the cytoplasm. It is found in the nucleus. The catalysed reaction is L-seryl-[I-kappa-B protein] + ATP = O-phospho-L-seryl-[I-kappa-B protein] + ADP + H(+). Activated when phosphorylated and inactivated when dephosphorylated. Its function is as follows. Phosphorylates inhibitors of NF-kappa-B thus leading to the dissociation of the inhibitor/NF-kappa-B complex and ultimately the degradation of the inhibitor. Phosphorylates 'Ser-10' of histone H3 at NF-kappa-B-regulated promoters during inflammatory responses triggered by cytokines. The protein is Inhibitor of nuclear factor kappa-B kinase subunit alpha (CHUK) of Gallus gallus (Chicken).